The primary structure comprises 330 residues: tRNA U34 carboxymethyltransferase (330 aa).

Carboxy-S-adenosyl-L-methionine-binding positions include lysine 91, tryptophan 105, lysine 110, glycine 130, 152–154 (DPS), 181–182 (IE), methionine 196, tyrosine 200, and arginine 315.

This sequence belongs to the class I-like SAM-binding methyltransferase superfamily. CmoB family. As to quaternary structure, homotetramer.

It carries out the reaction carboxy-S-adenosyl-L-methionine + 5-hydroxyuridine(34) in tRNA = 5-carboxymethoxyuridine(34) in tRNA + S-adenosyl-L-homocysteine + H(+). Catalyzes carboxymethyl transfer from carboxy-S-adenosyl-L-methionine (Cx-SAM) to 5-hydroxyuridine (ho5U) to form 5-carboxymethoxyuridine (cmo5U) at position 34 in tRNAs. The chain is tRNA U34 carboxymethyltransferase from Shewanella amazonensis (strain ATCC BAA-1098 / SB2B).